Reading from the N-terminus, the 683-residue chain is Elongation factor G 1 (683 aa).

The tr-type G domain maps to 3–278 (DKMRNIGIMA…AVVDFLPAPN (276 aa)). GTP contacts are provided by residues 12–19 (AHIDAGKT), 76–80 (DTPGH), and 130–133 (NKMD).

It belongs to the TRAFAC class translation factor GTPase superfamily. Classic translation factor GTPase family. EF-G/EF-2 subfamily.

The protein localises to the cytoplasm. Functionally, catalyzes the GTP-dependent ribosomal translocation step during translation elongation. During this step, the ribosome changes from the pre-translocational (PRE) to the post-translocational (POST) state as the newly formed A-site-bound peptidyl-tRNA and P-site-bound deacylated tRNA move to the P and E sites, respectively. Catalyzes the coordinated movement of the two tRNA molecules, the mRNA and conformational changes in the ribosome. The polypeptide is Elongation factor G 1 (Treponema denticola (strain ATCC 35405 / DSM 14222 / CIP 103919 / JCM 8153 / KCTC 15104)).